Reading from the N-terminus, the 452-residue chain is Bis(5'-adenosyl)-triphosphatase ENPP4 (452 aa).

An N-terminal signal peptide occupies residues 1 to 15; that stretch reads MKLLVILLFSGLITG. Residues 16 to 406 are Extracellular-facing; it reads FRSDSSSSLP…DQWCINLPEA (391 aa). The Zn(2+) site is built by aspartate 34 and threonine 70. Threonine 70 acts as the AMP-threonine intermediate in catalysis. 2 residues coordinate substrate: asparagine 91 and tyrosine 154. Asparagine 155 and asparagine 166 each carry an N-linked (GlcNAc...) asparagine glycan. Residues aspartate 189, histidine 193, aspartate 237, and histidine 238 each coordinate Zn(2+). Substrate is bound at residue aspartate 189. Residues cysteine 254 and cysteine 287 are joined by a disulfide bond. Asparagine 276 carries N-linked (GlcNAc...) asparagine glycosylation. Histidine 335 lines the Zn(2+) pocket. A disulfide bridge links cysteine 393 with cysteine 400. The helical transmembrane segment at 407–427 threads the bilayer; that stretch reads IAIVIGSLLVLTMLTCLIIIM. The Cytoplasmic segment spans residues 428 to 452; it reads QNRLSVPRPFSRLQLQEDDDDPLIG.

Belongs to the nucleotide pyrophosphatase/phosphodiesterase family. It depends on Zn(2+) as a cofactor.

It localises to the cell membrane. The catalysed reaction is P(1),P(3)-bis(5'-adenosyl) triphosphate + H2O = AMP + ADP + 2 H(+). Hydrolyzes extracellular Ap3A into AMP and ADP, and Ap4A into AMP and ATP. Ap3A and Ap4A are diadenosine polyphosphates thought to induce proliferation of vascular smooth muscle cells. Acts as a procoagulant, mediating platelet aggregation at the site of nascent thrombus via release of ADP from Ap3A and activation of ADP receptors. The protein is Bis(5'-adenosyl)-triphosphatase ENPP4 (ENPP4) of Pongo abelii (Sumatran orangutan).